Consider the following 508-residue polypeptide: Photosystem II CP47 reaction center protein (508 aa).

6 helical membrane-spanning segments follow: residues Ser-21–Ser-36, Ile-101–Trp-115, Gly-140–Phe-156, Ile-203–Ser-218, Val-237–Val-252, and Ser-457–Arg-472.

It belongs to the PsbB/PsbC family. PsbB subfamily. In terms of assembly, PSII is composed of 1 copy each of membrane proteins PsbA, PsbB, PsbC, PsbD, PsbE, PsbF, PsbH, PsbI, PsbJ, PsbK, PsbL, PsbM, PsbT, PsbX, PsbY, PsbZ, Psb30/Ycf12, at least 3 peripheral proteins of the oxygen-evolving complex and a large number of cofactors. It forms dimeric complexes. Requires Binds multiple chlorophylls. PSII binds additional chlorophylls, carotenoids and specific lipids. as cofactor.

The protein localises to the plastid. The protein resides in the chloroplast thylakoid membrane. Functionally, one of the components of the core complex of photosystem II (PSII). It binds chlorophyll and helps catalyze the primary light-induced photochemical processes of PSII. PSII is a light-driven water:plastoquinone oxidoreductase, using light energy to abstract electrons from H(2)O, generating O(2) and a proton gradient subsequently used for ATP formation. This chain is Photosystem II CP47 reaction center protein, found in Illicium oligandrum (Star anise).